The chain runs to 719 residues: Exonuclease mut-7 homolog (719 aa).

A disordered region spans residues Met-1–Gly-22. Residues Asn-575–Thr-629 enclose the 3'-5' exonuclease domain. The segment at Asn-644–Leu-719 is disordered. The segment covering Arg-667–His-678 has biased composition (basic residues). 2 stretches are compositionally biased toward polar residues: residues Asp-683 to Ala-692 and Glu-706 to Leu-719.

It belongs to the mut-7 family. Mg(2+) is required as a cofactor.

In terms of biological role, possesses 3'-5' exoribonuclease activity. Required for 3'-end trimming of AGO1-bound miRNAs. The polypeptide is Exonuclease mut-7 homolog (Aedes aegypti (Yellowfever mosquito)).